The chain runs to 246 residues: Sulfate transporter CysZ (246 aa).

Transmembrane regions (helical) follow at residues 24–44 (LFVL…IGFA), 69–89 (IVWP…FTMV), 148–168 (LLVL…WILF), and 214–234 (LLIP…ATLF).

The protein belongs to the CysZ family.

Its subcellular location is the cell inner membrane. Its function is as follows. High affinity, high specificity proton-dependent sulfate transporter, which mediates sulfate uptake. Provides the sulfur source for the cysteine synthesis pathway. In Pseudomonas aeruginosa (strain LESB58), this protein is Sulfate transporter CysZ.